A 147-amino-acid chain; its full sequence is Large ribosomal subunit protein bL9 (147 aa).

This sequence belongs to the bacterial ribosomal protein bL9 family.

In terms of biological role, binds to the 23S rRNA. The sequence is that of Large ribosomal subunit protein bL9 from Mycoplasmoides gallisepticum (strain R(low / passage 15 / clone 2)) (Mycoplasma gallisepticum).